A 356-amino-acid polypeptide reads, in one-letter code: Magnesium-protoporphyrin IX monomethyl ester [oxidative] cyclase (356 aa).

It belongs to the AcsF family. Fe cation is required as a cofactor.

The catalysed reaction is Mg-protoporphyrin IX 13-monomethyl ester + 3 NADPH + 3 O2 + 2 H(+) = 3,8-divinyl protochlorophyllide a + 3 NADP(+) + 5 H2O. It participates in porphyrin-containing compound metabolism; chlorophyll biosynthesis (light-independent). Catalyzes the formation of the isocyclic ring in chlorophyll biosynthesis. Mediates the cyclase reaction, which results in the formation of divinylprotochlorophyllide (Pchlide) characteristic of all chlorophylls from magnesium-protoporphyrin IX 13-monomethyl ester (MgPMME). The sequence is that of Magnesium-protoporphyrin IX monomethyl ester [oxidative] cyclase from Synechococcus sp. (strain CC9605).